Reading from the N-terminus, the 338-residue chain is L-serine dehydratase (338 aa).

N6-(pyridoxal phosphate)lysine is present on lysine 39.

It belongs to the serine/threonine dehydratase family. Pyridoxal 5'-phosphate serves as cofactor.

It localises to the cytoplasm. It catalyses the reaction L-serine = pyruvate + NH4(+). It functions in the pathway carbohydrate biosynthesis; gluconeogenesis. In Saccharomyces cerevisiae (strain YJM789) (Baker's yeast), this protein is L-serine dehydratase (SDL1).